We begin with the raw amino-acid sequence, 558 residues long: Phosphatidylserine lipase ABHD16A (558 aa).

A run of 2 helical transmembrane segments spans residues 60–80 and 93–113; these read ILAL…FAFF and VVPF…VACL. Over 114–558 the chain is Cytoplasmic; the sequence is RGIGRWTNPQ…AQNFQMPWHL (445 aa). An AB hydrolase-1 domain is found at 281 to 407; it reads LVICCEGNAG…LVTRTVRQHL (127 aa). Residues Ser355, Asp430, and His507 each act as charge relay system in the active site.

It belongs to the AB hydrolase superfamily. ABHD16 family.

It is found in the membrane. It catalyses the reaction 1-heptadecanoyl-2-(5Z,8Z,11Z,14Z-eicosatetraenoyl)-sn-glycero-3-phosphoserine + H2O = 1-heptadecanoyl-sn-glycero-3-phosphoserine + (5Z,8Z,11Z,14Z)-eicosatetraenoate + H(+). The enzyme catalyses 1-hexadecanoyl-2-(9Z-octadecenoyl)-sn-glycero-3-phospho-L-serine + H2O = 1-hexadecanoyl-sn-glycero-3-phospho-L-serine + (9Z)-octadecenoate + H(+). The catalysed reaction is 1-octadecanoyl-2-(9Z,12Z-octadecadienoyl)-sn-glycero-3-phosphoserine + H2O = 1-octadecanoyl-sn-glycero-3-phosphoserine + (9Z,12Z)-octadecadienoate + H(+). It carries out the reaction 1-heptadecanoyl-2-(5Z,8Z,11Z,14Z-eicosatetraenoyl)-sn-glycero-3-phosphocholine + H2O = 1-heptadecanoyl-sn-glycero-3-phosphocholine + (5Z,8Z,11Z,14Z)-eicosatetraenoate + H(+). It catalyses the reaction 1-hexadecanoyl-2-(9Z-octadecenoyl)-sn-glycero-3-phosphoglycerol + H2O = 1-hexadecanoyl-sn-glycero-3-phosphoglycerol + (9Z)-octadecenoate + H(+). The enzyme catalyses 1-hexadecanoyl-2-(9Z-octadecenoyl)-sn-glycero-3-phospho-(1D-myo-inositol) + H2O = 1-hexadecanoyl-sn-glycero-3-phospho-(1D-myo-inositol) + (9Z)-octadecenoate + H(+). The catalysed reaction is 1-heptadecanoyl-2-(5Z,8Z,11Z,14Z-eicosatetraenoyl)-sn-glycero-3-phosphoethanolamine + H2O = 1-heptadecanoyl-sn-glycero-3-phosphoethanolamine + (5Z,8Z,11Z,14Z)-eicosatetraenoate + H(+). It carries out the reaction 1-hexadecanoyl-2-(9Z-octadecenoyl)-sn-glycero-3-phospho-(1'-sn-glycerol) + H2O = 1-hexadecanoyl-sn-glycero-3-phospho-(1'-sn-glycerol) + (9Z)-octadecenoate + H(+). It catalyses the reaction Hydrolyzes glycerol monoesters of long-chain fatty acids.. The enzyme catalyses 1-tetradecanoylglycerol + H2O = tetradecanoate + glycerol + H(+). The catalysed reaction is 2-hexadecanoylglycerol + H2O = glycerol + hexadecanoate + H(+). It carries out the reaction 1-(9Z-octadecenoyl)-glycerol + H2O = glycerol + (9Z)-octadecenoate + H(+). It catalyses the reaction 2-(9Z-octadecenoyl)-glycerol + H2O = glycerol + (9Z)-octadecenoate + H(+). The enzyme catalyses 2-(9Z,12Z-octadecadienoyl)-glycerol + H2O = (9Z,12Z)-octadecadienoate + glycerol + H(+). The catalysed reaction is 1-(5Z,8Z,11Z,14Z-eicosatetraenoyl)-glycerol + H2O = glycerol + (5Z,8Z,11Z,14Z)-eicosatetraenoate + H(+). It carries out the reaction 2-(5Z,8Z,11Z,14Z-eicosatetraenoyl)-glycerol + H2O = glycerol + (5Z,8Z,11Z,14Z)-eicosatetraenoate + H(+). It catalyses the reaction prostaglandin D2-1-glycerol ester + H2O = prostaglandin D2 + glycerol + H(+). The enzyme catalyses 2-glyceryl-15-deoxy-Delta(12,14)-prostaglandin J2 + H2O = 15-deoxy-Delta(12,14)-prostaglandin J2 + glycerol + H(+). The catalysed reaction is 1-(9Z,12Z-octadecadienoyl)-glycerol + H2O = (9Z,12Z)-octadecadienoate + glycerol + H(+). Phosphatidylserine (PS) lipase that mediates the hydrolysis of phosphatidylserine to generate lysophosphatidylserine (LPS). LPS constitutes a class of signaling lipids that regulates immunological and neurological processes. Has no activity towards diacylglycerol, triacylglycerol or lysophosphatidylserine lipase. Also has monoacylglycerol lipase activity, with preference for 1-(9Z,12Z-octadecadienoyl)-glycerol (1-LG) and 2-glyceryl-15-deoxy-Delta(12,14)-prostaglandin J2 (15d-PGJ(2)-G). This is Phosphatidylserine lipase ABHD16A from Pongo abelii (Sumatran orangutan).